The chain runs to 359 residues: Aminomethyltransferase (359 aa).

Belongs to the GcvT family. In terms of assembly, the glycine cleavage system is composed of four proteins: P, T, L and H.

It catalyses the reaction N(6)-[(R)-S(8)-aminomethyldihydrolipoyl]-L-lysyl-[protein] + (6S)-5,6,7,8-tetrahydrofolate = N(6)-[(R)-dihydrolipoyl]-L-lysyl-[protein] + (6R)-5,10-methylene-5,6,7,8-tetrahydrofolate + NH4(+). In terms of biological role, the glycine cleavage system catalyzes the degradation of glycine. This chain is Aminomethyltransferase, found in Idiomarina loihiensis (strain ATCC BAA-735 / DSM 15497 / L2-TR).